The primary structure comprises 597 residues: Elongation factor 4 (597 aa).

Residues 2-184 form the tr-type G domain; sequence KNIRNFSIIA…SIVEHLPAPE (183 aa). Residues 14 to 19 and 131 to 134 each bind GTP; these read DHGKST and NKID.

It belongs to the TRAFAC class translation factor GTPase superfamily. Classic translation factor GTPase family. LepA subfamily.

The protein resides in the cell inner membrane. It carries out the reaction GTP + H2O = GDP + phosphate + H(+). In terms of biological role, required for accurate and efficient protein synthesis under certain stress conditions. May act as a fidelity factor of the translation reaction, by catalyzing a one-codon backward translocation of tRNAs on improperly translocated ribosomes. Back-translocation proceeds from a post-translocation (POST) complex to a pre-translocation (PRE) complex, thus giving elongation factor G a second chance to translocate the tRNAs correctly. Binds to ribosomes in a GTP-dependent manner. The chain is Elongation factor 4 from Desulfotalea psychrophila (strain LSv54 / DSM 12343).